We begin with the raw amino-acid sequence, 338 residues long: Phosphate acyltransferase (338 aa).

Belongs to the PlsX family. Homodimer. Probably interacts with PlsY.

The protein resides in the cytoplasm. It catalyses the reaction a fatty acyl-[ACP] + phosphate = an acyl phosphate + holo-[ACP]. The protein operates within lipid metabolism; phospholipid metabolism. Functionally, catalyzes the reversible formation of acyl-phosphate (acyl-PO(4)) from acyl-[acyl-carrier-protein] (acyl-ACP). This enzyme utilizes acyl-ACP as fatty acyl donor, but not acyl-CoA. The polypeptide is Phosphate acyltransferase (Endomicrobium trichonymphae).